A 311-amino-acid chain; its full sequence is Cytosolic Fe-S cluster assembly factor Nubp1 homolog (311 aa).

Cys-9, Cys-23, Cys-26, and Cys-32 together coordinate [4Fe-4S] cluster. 63–70 (GKGGVGKS) is a binding site for ATP. [4Fe-4S] cluster contacts are provided by Cys-240 and Cys-243.

It belongs to the Mrp/NBP35 ATP-binding proteins family. NUBP1/NBP35 subfamily. Heterotetramer of 2 Nubp1 and 2 Nubp2 chains. [4Fe-4S] cluster serves as cofactor.

Its subcellular location is the cytoplasm. Its function is as follows. Component of the cytosolic iron-sulfur (Fe/S) protein assembly (CIA) machinery. Required for maturation of extramitochondrial Fe-S proteins. The Nubp1-Nubp2 heterotetramer forms a Fe-S scaffold complex, mediating the de novo assembly of an Fe-S cluster and its transfer to target apoproteins. In Drosophila erecta (Fruit fly), this protein is Cytosolic Fe-S cluster assembly factor Nubp1 homolog.